We begin with the raw amino-acid sequence, 825 residues long: Leucine-rich repeat and guanylate kinase domain-containing protein (825 aa).

Residues 73–96 (DSDGDEDQGEGEAGSEESSESEML) are disordered. LRR repeat units lie at residues 129–149 (YLNLTLSGCNLIDVSILCGYV), 150–171 (HLQKLDLSANKIEDLSCVSCMP), 172–193 (YLLELNASQNNLTTFFNFKPPK), 194–215 (NLKKADFSHNQISEICDLSAYH), 216–237 (ALTKLILDGNEIEEISGLEMCN), 238–259 (NLIHLSLANNKITTINGLNKLP), 260–280 (IKILCLSNNQIEMITGLEDLK), 281–302 (ALQNLDLSHNQISSLQGLENHD), and 303–324 (LLEVINLEDNKIAELREIEYIK). An LRRCT domain is found at 337-375 (NPIQEKSEYWFFVIFMLLRLTELDQKKIKVEEKVSAVNK). A Guanylate kinase-like domain is found at 414-597 (YPMLILAGPE…AYQKLSQLIR (184 aa)). 421–428 (GPEACGKR) is an ATP binding site. The tract at residues 760–825 (PEGSISSHLG…TLPPIPQGRR (66 aa)) is disordered. The span at 763–774 (SISSHLGSGASD) shows a compositional bias: polar residues. The segment covering 816-825 (TLPPIPQGRR) has biased composition (pro residues).

Interacts (via guanylate kinase-like domain) with RIMBP3 (via coiled-coil region). Interacts (via guanylate kinase-like domain) with HOOK2. Interacts (via LRRCT domain) with KLC3. Interacts with HOOK1 and HOOK3.

The protein localises to the cytoplasmic vesicle. The protein resides in the secretory vesicle. It is found in the acrosome. It localises to the cytoplasm. Its subcellular location is the cytoskeleton. The protein localises to the cilium basal body. In terms of biological role, involved in multiple aspects of sperm assembly including acrosome attachment, shaping of the sperm head and in the early aspects of axoneme development. Not essential for primary cilium biogenesis. The chain is Leucine-rich repeat and guanylate kinase domain-containing protein (LRGUK) from Homo sapiens (Human).